A 297-amino-acid polypeptide reads, in one-letter code: D-aminoacyl-tRNA deacylase (297 aa).

The protein belongs to the DtdA deacylase family. In terms of assembly, monomer. Zn(2+) serves as cofactor.

It catalyses the reaction a D-aminoacyl-tRNA + H2O = a tRNA + a D-alpha-amino acid + H(+). The catalysed reaction is glycyl-tRNA(Ala) + H2O = tRNA(Ala) + glycine + H(+). Functionally, D-aminoacyl-tRNA deacylase with broad substrate specificity. By recycling D-aminoacyl-tRNA to D-amino acids and free tRNA molecules, this enzyme counteracts the toxicity associated with the formation of D-aminoacyl-tRNA entities in vivo. In Methanosarcina acetivorans (strain ATCC 35395 / DSM 2834 / JCM 12185 / C2A), this protein is D-aminoacyl-tRNA deacylase.